The chain runs to 210 residues: Uracil phosphoribosyltransferase (210 aa).

5-phospho-alpha-D-ribose 1-diphosphate-binding positions include Arg-78, Arg-103, and 130 to 138 (DPMLATGGT). Uracil contacts are provided by residues Ile-193 and 198 to 200 (GDA). Position 199 (Asp-199) interacts with 5-phospho-alpha-D-ribose 1-diphosphate.

This sequence belongs to the UPRTase family. Mg(2+) serves as cofactor.

It catalyses the reaction UMP + diphosphate = 5-phospho-alpha-D-ribose 1-diphosphate + uracil. It participates in pyrimidine metabolism; UMP biosynthesis via salvage pathway; UMP from uracil: step 1/1. Allosterically activated by GTP. In terms of biological role, catalyzes the conversion of uracil and 5-phospho-alpha-D-ribose 1-diphosphate (PRPP) to UMP and diphosphate. This is Uracil phosphoribosyltransferase from Stenotrophomonas maltophilia (strain R551-3).